The chain runs to 181 residues: Large ribosomal subunit protein uL5 (181 aa).

The protein belongs to the universal ribosomal protein uL5 family. Part of the 50S ribosomal subunit; part of the 5S rRNA/L5/L18/L25 subcomplex. Contacts the 5S rRNA and the P site tRNA. Forms a bridge to the 30S subunit in the 70S ribosome.

This is one of the proteins that bind and probably mediate the attachment of the 5S RNA into the large ribosomal subunit, where it forms part of the central protuberance. In the 70S ribosome it contacts protein S13 of the 30S subunit (bridge B1b), connecting the 2 subunits; this bridge is implicated in subunit movement. Contacts the P site tRNA; the 5S rRNA and some of its associated proteins might help stabilize positioning of ribosome-bound tRNAs. This Aster yellows witches'-broom phytoplasma (strain AYWB) protein is Large ribosomal subunit protein uL5.